The following is a 187-amino-acid chain: Large ribosomal subunit protein uL5 (187 aa).

The protein belongs to the universal ribosomal protein uL5 family. In terms of assembly, part of the 50S ribosomal subunit; part of the 5S rRNA/L5/L18/L25 subcomplex. Contacts the 5S rRNA and the P site tRNA. Forms a bridge to the 30S subunit in the 70S ribosome.

Its function is as follows. This is one of the proteins that bind and probably mediate the attachment of the 5S RNA into the large ribosomal subunit, where it forms part of the central protuberance. In the 70S ribosome it contacts protein S13 of the 30S subunit (bridge B1b), connecting the 2 subunits; this bridge is implicated in subunit movement. Contacts the P site tRNA; the 5S rRNA and some of its associated proteins might help stabilize positioning of ribosome-bound tRNAs. This is Large ribosomal subunit protein uL5 from Corynebacterium diphtheriae (strain ATCC 700971 / NCTC 13129 / Biotype gravis).